The chain runs to 418 residues: uncharacterized protein (418 aa).

This is an uncharacterized protein from Escherichia coli (strain K12).